A 292-amino-acid chain; its full sequence is tRNA(Ile)-lysidine synthase (292 aa).

ATP is bound at residue 32–37 (SGGADS).

Belongs to the tRNA(Ile)-lysidine synthase family.

The protein localises to the cytoplasm. It carries out the reaction cytidine(34) in tRNA(Ile2) + L-lysine + ATP = lysidine(34) in tRNA(Ile2) + AMP + diphosphate + H(+). Ligates lysine onto the cytidine present at position 34 of the AUA codon-specific tRNA(Ile) that contains the anticodon CAU, in an ATP-dependent manner. Cytidine is converted to lysidine, thus changing the amino acid specificity of the tRNA from methionine to isoleucine. This is tRNA(Ile)-lysidine synthase from Corynebacterium diphtheriae (strain ATCC 700971 / NCTC 13129 / Biotype gravis).